The chain runs to 249 residues: Probable septum site-determining protein MinC (249 aa).

A disordered region spans residues 115 to 144; the sequence is PTAVSPPPPPPPPPARAEPAPPAARPAPGR. Residues 118-139 show a composition bias toward pro residues; sequence VSPPPPPPPPPARAEPAPPAAR.

Belongs to the MinC family. As to quaternary structure, interacts with MinD and FtsZ.

Functionally, cell division inhibitor that blocks the formation of polar Z ring septums. Rapidly oscillates between the poles of the cell to destabilize FtsZ filaments that have formed before they mature into polar Z rings. Prevents FtsZ polymerization. In Xanthomonas axonopodis pv. citri (strain 306), this protein is Probable septum site-determining protein MinC.